Reading from the N-terminus, the 345-residue chain is MPYEKELAAAKKAVSLAARLSQEVQKSLLQSDVRSKSDKSPVTAADYGSQAVISHVLERELHPEPLYLVAEENAEDLHKNGAEEFLESITKLVNNALASDDSYANSSLSMDDVRKAIDHGRSQGGSSGRHWILDPVDGTRGFVKGEEYAVALALLVEGKVVLGVMACPKLENHKSSSSGCLFFATVGEGAYVQSLEGDSHPPQKVQVSNIENPEEATFVESSHKPIPIHSSIANKLGIKAPPLRIHSQVKYAALARGDAEIYLRFTLKGYREFIWNHAAGAIITTEAGGVVCDADGNPLDFSRGNHLEHKTGIVVSTKNLMPRLLKAIRESIEEEMLLSETQLKL.

Asp-46 functions as the Proton acceptor in the catalytic mechanism. Residues Glu-71, Asp-134, Val-136, and Asp-137 each contribute to the Mg(2+) site. Thr-139 serves as the catalytic Proton acceptor. 4 residues coordinate adenosine 3',5'-bisphosphate: Thr-139, Ser-247, Lys-250, and Arg-264. AMP contacts are provided by Ser-247, Lys-250, and Arg-264.

The protein belongs to the inositol monophosphatase superfamily. It depends on Mg(2+) as a cofactor.

It catalyses the reaction 3'-phosphoadenylyl sulfate + H2O = adenosine 5'-phosphosulfate + phosphate. The catalysed reaction is adenosine 3',5'-bisphosphate + H2O = AMP + phosphate. It carries out the reaction adenosine 2',5'-bisphosphate + H2O = AMP + phosphate. The enzyme catalyses 1D-myo-inositol 1,4-bisphosphate + H2O = 1D-myo-inositol 4-phosphate + phosphate. It catalyses the reaction 1D-myo-inositol 1,3,4-trisphosphate + H2O = 1D-myo-inositol 3,4-bisphosphate + phosphate. It functions in the pathway signal transduction; phosphatidylinositol signaling pathway. In terms of biological role, phosphatase that converts adenosine 3'-phosphate 5'-phosphosulfate (PAPS) to adenosine 5'-phosphosulfate (APS) and 3'(2')-phosphoadenosine 5'-phosphate (PAP) to AMP. Is also able to hydrolyze inositol 1,4-bisphosphate and inositol 1,3,4-trisphosphate. This is Probable 3'(2'),5'-bisphosphate nucleotidase 4 (SAL4) from Arabidopsis thaliana (Mouse-ear cress).